The sequence spans 254 residues: Low affinity immunoglobulin gamma Fc region receptor III-A (254 aa).

The first 20 residues, 1-20 (MWHLLPPSALLLLISSVTKA), serve as a signal peptide directing secretion. Residues 21 to 209 (ADPSKAVVLL…IAPLFPLWQQ (189 aa)) lie on the Extracellular side of the membrane. Ig-like C2-type domains follow at residues 23–104 (PSKA…VQLQ) and 121–174 (KGES…YYCR). 4 N-linked (GlcNAc...) asparagine glycosylation sites follow: asparagine 42, asparagine 63, asparagine 166, and asparagine 181. 2 disulfide bridges follow: cysteine 47/cysteine 90 and cysteine 129/cysteine 173. Residues 210-230 (IAFCLMMGLLFAVDTGLYFFV) traverse the membrane as a helical segment. The Cytoplasmic segment spans residues 231-254 (RRDLRRSMVHKEEYNFKWSQAQDK).

Forms a heterooligomeric complex with ITAM-containing signaling subunits FCER1G. Interacts (via transmembrane domain) with signaling subunits; this interaction is a prerequisite for receptor complex expression on the cell surface and intracellular signal transduction. Binds the Fc region of antigen-complexed IgG. Post-translationally, N-glycosylated. Phosphorylated following receptor ligation.

It is found in the cell membrane. In terms of biological role, receptor for the invariable Fc fragment of immunoglobulin gamma (IgG). Binds with intermediate affinity to both IgG2a and IgG2b. Can bind to IgG2a and IgG2b monomers. Does not display binding to IgG1 or IgG3. Recognizes neutralizing virus-specific IgGs displayed on the cell surface of infected cells and triggers antibody-dependent cellular cytotoxicity (ADCC). Confers protection to lethal influenza virus infection. On splenic dendritic cells, uptakes antigen immune complexes and efficiently divert them into MHC class I and II antigen presentation pathways to provide for superior priming of CD4-positive and CD8-positive T cell immune responses. Mediates neutrophil activation by IgG complexes redundantly with FCGR2A. Plays a role in promoting bone resorption by enhancing osteoclast differentiation following binding to IgG2a. Also acts as a receptor for the Fc region of immunoglobulin epsilon (IgE). Binds with low affinity to both the a and b allotypes of IgE. Has also been shown to bind to IgE allotype a only but not to allotype b. Binds aggregated IgE but not the monomeric form and bound monomeric IgG is readily displaced by IgE complexes. Binding to IgE promotes macrophage-mediated phagocytosis, antigen presentation to T cells, production of pro-inflammatory cytokines and the late phase of cutaneous allergic reactions. Mediates enhanced ADCC in response to afucosylated IgGs. The polypeptide is Low affinity immunoglobulin gamma Fc region receptor III-A (Cavia porcellus (Guinea pig)).